Here is a 200-residue protein sequence, read N- to C-terminus: Peroxiredoxin (200 aa).

A Thioredoxin domain is found at 6–166; sequence ARIGHLAPGF…ILRLVQAFQF (161 aa). Cys52 acts as the Cysteine sulfenic acid (-SOH) intermediate in catalysis.

This sequence belongs to the peroxiredoxin family. AhpC/Prx1 subfamily. In terms of assembly, homodimer; disulfide-linked, upon oxidation.

It carries out the reaction a hydroperoxide + [thioredoxin]-dithiol = an alcohol + [thioredoxin]-disulfide + H2O. Its function is as follows. Thiol-specific peroxidase that catalyzes the reduction of hydrogen peroxide and organic hydroperoxides to water and alcohols, respectively. Plays a role in cell protection against oxidative stress by detoxifying peroxides and as sensor of hydrogen peroxide-mediated signaling events. The sequence is that of Peroxiredoxin from Oncorhynchus mykiss (Rainbow trout).